We begin with the raw amino-acid sequence, 75 residues long: Small ribosomal subunit protein eS17 (75 aa).

Belongs to the eukaryotic ribosomal protein eS17 family.

This Thermoplasma acidophilum (strain ATCC 25905 / DSM 1728 / JCM 9062 / NBRC 15155 / AMRC-C165) protein is Small ribosomal subunit protein eS17.